The sequence spans 352 residues: 7,8-didemethyl-8-hydroxy-5-deazariboflavin synthase (352 aa).

Residues Ile-35–Asn-275 form the Radical SAM core domain. Positions 49, 53, and 56 each coordinate [4Fe-4S] cluster.

Belongs to the radical SAM superfamily. CofG family. Consists of two subunits, CofG and CofH. Requires [4Fe-4S] cluster as cofactor.

The catalysed reaction is 5-amino-5-(4-hydroxybenzyl)-6-(D-ribitylimino)-5,6-dihydrouracil + S-adenosyl-L-methionine = 7,8-didemethyl-8-hydroxy-5-deazariboflavin + 5'-deoxyadenosine + L-methionine + NH4(+) + H(+). It participates in cofactor biosynthesis; coenzyme F0 biosynthesis. Catalyzes the radical-mediated synthesis of 7,8-didemethyl-8-hydroxy-5-deazariboflavin from 5-amino-5-(4-hydroxybenzyl)-6-(D-ribitylimino)-5,6-dihydrouracil. This Methanococcus maripaludis (strain C5 / ATCC BAA-1333) protein is 7,8-didemethyl-8-hydroxy-5-deazariboflavin synthase.